Here is a 698-residue protein sequence, read N- to C-terminus: Elongation factor G (698 aa).

The region spanning 8 to 284 (ANVRNIGIMA…AVVDFLPSPL (277 aa)) is the tr-type G domain. Residues 17–24 (AHIDAGKT), 81–85 (DTPGH), and 135–138 (NKLD) contribute to the GTP site. Positions 289–309 (IEGTGTDGETPLQRKPSTSEP) are disordered.

It belongs to the TRAFAC class translation factor GTPase superfamily. Classic translation factor GTPase family. EF-G/EF-2 subfamily.

It localises to the cytoplasm. Catalyzes the GTP-dependent ribosomal translocation step during translation elongation. During this step, the ribosome changes from the pre-translocational (PRE) to the post-translocational (POST) state as the newly formed A-site-bound peptidyl-tRNA and P-site-bound deacylated tRNA move to the P and E sites, respectively. Catalyzes the coordinated movement of the two tRNA molecules, the mRNA and conformational changes in the ribosome. This is Elongation factor G from Salinispora arenicola (strain CNS-205).